Consider the following 618-residue polypeptide: Probable arginine--tRNA ligase, cytoplasmic (618 aa).

Interaction with tRNA regions lie at residues 60-61 (ET) and 104-109 (NGIFLR). Residues 146–151 (EFSSPN), His160, Tyr359, Asp363, and Gln387 contribute to the L-arginine site. Positions 149-160 (SPNIAKPFHAGH) match the 'HIGH' region motif. Residues 496–510 (DTGPYLQYAHSRLSS) are interaction with tRNA.

The protein belongs to the class-I aminoacyl-tRNA synthetase family.

The protein resides in the cytoplasm. The catalysed reaction is tRNA(Arg) + L-arginine + ATP = L-arginyl-tRNA(Arg) + AMP + diphosphate. Its function is as follows. Forms part of a macromolecular complex that catalyzes the attachment of specific amino acids to cognate tRNAs during protein synthesis. The polypeptide is Probable arginine--tRNA ligase, cytoplasmic (mrs1) (Schizosaccharomyces pombe (strain 972 / ATCC 24843) (Fission yeast)).